Reading from the N-terminus, the 126-residue chain is Urease subunit beta (126 aa).

It belongs to the urease beta subunit family. Heterotrimer of UreA (gamma), UreB (beta) and UreC (alpha) subunits. Three heterotrimers associate to form the active enzyme.

It localises to the cytoplasm. It carries out the reaction urea + 2 H2O + H(+) = hydrogencarbonate + 2 NH4(+). It functions in the pathway nitrogen metabolism; urea degradation; CO(2) and NH(3) from urea (urease route): step 1/1. In Sporosarcina pasteurii (Bacillus pasteurii), this protein is Urease subunit beta.